The following is a 193-amino-acid chain: NADH-quinone oxidoreductase subunit B (193 aa).

Positions 1–11 (MGLTGTNTTLV) are enriched in polar residues. Residues 1–23 (MGLTGTNTTLVAPQPKGILDPRT) are disordered. 4 residues coordinate [4Fe-4S] cluster: Cys72, Cys73, Cys137, and Cys167.

Belongs to the complex I 20 kDa subunit family. In terms of assembly, NDH-1 is composed of 14 different subunits. Subunits NuoB, C, D, E, F, and G constitute the peripheral sector of the complex. The cofactor is [4Fe-4S] cluster.

It localises to the cell inner membrane. It carries out the reaction a quinone + NADH + 5 H(+)(in) = a quinol + NAD(+) + 4 H(+)(out). In terms of biological role, NDH-1 shuttles electrons from NADH, via FMN and iron-sulfur (Fe-S) centers, to quinones in the respiratory chain. Couples the redox reaction to proton translocation (for every two electrons transferred, four hydrogen ions are translocated across the cytoplasmic membrane), and thus conserves the redox energy in a proton gradient. In Brucella canis (strain ATCC 23365 / NCTC 10854 / RM-666), this protein is NADH-quinone oxidoreductase subunit B.